Consider the following 290-residue polypeptide: UPF0761 membrane protein YihY (290 aa).

The next 6 membrane-spanning stretches (helical) occupy residues 44–64 (LLSL…FPMF), 104–124 (VGAC…DSAL), 140–160 (FAVY…SLAI), 183–203 (IFPL…VPTI), 210–230 (AIVG…GFAL), and 244–264 (VLAV…IVLL).

This sequence belongs to the UPF0761 family.

Its subcellular location is the cell inner membrane. This is UPF0761 membrane protein YihY from Shigella sonnei (strain Ss046).